The sequence spans 292 residues: UDP-N-acetylenolpyruvoylglucosamine reductase (292 aa).

An FAD-binding PCMH-type domain is found at 27–188; that stretch reads KIGGPVRLFI…LRVGFRIIKG (162 aa). R166 is an active-site residue. Residue S217 is the Proton donor of the active site. Residue E288 is part of the active site.

It belongs to the MurB family. FAD serves as cofactor.

The protein resides in the cytoplasm. The enzyme catalyses UDP-N-acetyl-alpha-D-muramate + NADP(+) = UDP-N-acetyl-3-O-(1-carboxyvinyl)-alpha-D-glucosamine + NADPH + H(+). It participates in cell wall biogenesis; peptidoglycan biosynthesis. Its function is as follows. Cell wall formation. The chain is UDP-N-acetylenolpyruvoylglucosamine reductase from Thermosipho melanesiensis (strain DSM 12029 / CIP 104789 / BI429).